The chain runs to 124 residues: Large ribosomal subunit protein bL12 (124 aa).

This sequence belongs to the bacterial ribosomal protein bL12 family. Homodimer. Part of the ribosomal stalk of the 50S ribosomal subunit. Forms a multimeric L10(L12)X complex, where L10 forms an elongated spine to which 2 to 4 L12 dimers bind in a sequential fashion. Binds GTP-bound translation factors.

Forms part of the ribosomal stalk which helps the ribosome interact with GTP-bound translation factors. Is thus essential for accurate translation. The polypeptide is Large ribosomal subunit protein bL12 (Janthinobacterium sp. (strain Marseille) (Minibacterium massiliensis)).